Consider the following 899-residue polypeptide: Protein translocase subunit SecA (899 aa).

Residues Gln-87, 105-109, and Asp-516 each bind ATP; that span reads GEGKT. Cys-884, Cys-886, Cys-895, and His-896 together coordinate Zn(2+).

Belongs to the SecA family. Monomer and homodimer. Part of the essential Sec protein translocation apparatus which comprises SecA, SecYEG and auxiliary proteins SecDF. Other proteins may also be involved. Zn(2+) is required as a cofactor.

The protein localises to the cell inner membrane. It localises to the cytoplasm. It catalyses the reaction ATP + H2O + cellular proteinSide 1 = ADP + phosphate + cellular proteinSide 2.. Its function is as follows. Part of the Sec protein translocase complex. Interacts with the SecYEG preprotein conducting channel. Has a central role in coupling the hydrolysis of ATP to the transfer of proteins into and across the cell membrane, serving as an ATP-driven molecular motor driving the stepwise translocation of polypeptide chains across the membrane. This Borreliella burgdorferi (strain ATCC 35210 / DSM 4680 / CIP 102532 / B31) (Borrelia burgdorferi) protein is Protein translocase subunit SecA.